The chain runs to 808 residues: Probable mannosyl-oligosaccharide glucosidase (808 aa).

The Cytoplasmic segment spans residues 1–11 (MVSDMLGGNKR). The helical; Signal-anchor for type II membrane protein transmembrane segment at 12 to 31 (WILFGLLSFLLNCVLVSCSV) threads the bilayer. The Lumenal segment spans residues 32-808 (EDIEKAANDS…LVVNIMSENY (777 aa)). Asn39 carries N-linked (GlcNAc...) asparagine glycosylation. The active-site Proton donor is the Asp580. The active-site Proton acceptor is Glu778.

It belongs to the glycosyl hydrolase 63 family.

The protein localises to the endoplasmic reticulum membrane. The catalysed reaction is N(4)-(alpha-D-Glc-(1-&gt;2)-alpha-D-Glc-(1-&gt;3)-alpha-D-Glc-(1-&gt;3)-alpha-D-Man-(1-&gt;2)-alpha-D-Man-(1-&gt;2)-alpha-D-Man-(1-&gt;3)-[alpha-D-Man-(1-&gt;2)-alpha-D-Man-(1-&gt;3)-[alpha-D-Man-(1-&gt;2)-alpha-D-Man-(1-&gt;6)]-alpha-D-Man-(1-&gt;6)]-beta-D-Man-(1-&gt;4)-beta-D-GlcNAc-(1-&gt;4)-beta-D-GlcNAc)-L-asparaginyl-[protein] + H2O = N(4)-(alpha-D-Glc-(1-&gt;3)-alpha-D-Glc-(1-&gt;3)-alpha-D-Man-(1-&gt;2)-alpha-D-Man-(1-&gt;2)-alpha-D-Man-(1-&gt;3)-[alpha-D-Man-(1-&gt;2)-alpha-D-Man-(1-&gt;3)-[alpha-D-Man-(1-&gt;2)-alpha-D-Man-(1-&gt;6)]-alpha-D-Man-(1-&gt;6)]-beta-D-Man-(1-&gt;4)-beta-D-GlcNAc-(1-&gt;4)-beta-D-GlcNAc)-L-asparaginyl-[protein] + beta-D-glucose. In terms of biological role, cleaves the distal alpha 1,2-linked glucose residue from the Glc(3)Man(9)GlcNAc(2) oligosaccharide precursor highly specifically. This chain is Probable mannosyl-oligosaccharide glucosidase, found in Schizosaccharomyces pombe (strain 972 / ATCC 24843) (Fission yeast).